A 123-amino-acid chain; its full sequence is Probable cyclase otaY (123 aa).

Belongs to the aurE cyclase family.

It participates in mycotoxin biosynthesis. Probable cyclase; part of the gene cluster that mediates the biosynthesis of ochratoxin A (OTA), a mycotoxin composed of a chlorinated type I polyketide dihydroisocoumarin moiety linked to L-phenylalanine, and demonstrated to have nephrotoxic, immunotoxic, genotoxic, neurotoxic, and teratogenic properties. OtaY is probably involved in the polyketide cyclization. The pathway begins with the highly reducing polyketide synthase otaA that catalyzes the formation of the isocoumarin group during the initial stages of biosynthesis, starting from one acetate and 4 malonate units, to originate the characteristic pentaketide skeleton 7-methylmellein (7-MM) of the OTA molecule. The newly identified cyclase otaY might be involved in the polyketide cyclization reaction during the initial steps of the OTA biosynthesis. 7-MM is then oxidized into 7-carboxymellein (also called ochratoxin beta) by the cytochrome P450 monooxygenase otaC. The NRPS encoded by the otaB gene is involved in the linking of phenylalanine to the dihydroisocoumarin ring. The reaction catalyzed by NRPS results in the production of ochratoxin B (OTB), which is the non-chlorinated analog of OTA and which subsequently serves as the substrate of the halogenase otaD for chlorination activity to form the final molecular structure of OTA, containing a chlorine atom in the C-5 position of the molecule. This is Probable cyclase otaY from Aspergillus carbonarius (strain ITEM 5010).